We begin with the raw amino-acid sequence, 185 residues long: Peptidyl-tRNA hydrolase (185 aa).

Tyr14 is a tRNA binding site. His19 (proton acceptor) is an active-site residue. The tRNA site is built by Phe64, Asn66, and Asn112.

Belongs to the PTH family. As to quaternary structure, monomer.

The protein localises to the cytoplasm. It carries out the reaction an N-acyl-L-alpha-aminoacyl-tRNA + H2O = an N-acyl-L-amino acid + a tRNA + H(+). In terms of biological role, hydrolyzes ribosome-free peptidyl-tRNAs (with 1 or more amino acids incorporated), which drop off the ribosome during protein synthesis, or as a result of ribosome stalling. Catalyzes the release of premature peptidyl moieties from peptidyl-tRNA molecules trapped in stalled 50S ribosomal subunits, and thus maintains levels of free tRNAs and 50S ribosomes. This is Peptidyl-tRNA hydrolase from Levilactobacillus brevis (strain ATCC 367 / BCRC 12310 / CIP 105137 / JCM 1170 / LMG 11437 / NCIMB 947 / NCTC 947) (Lactobacillus brevis).